The sequence spans 479 residues: Ribosomal RNA small subunit methyltransferase F (479 aa).

S-adenosyl-L-methionine contacts are provided by residues alanine 125–lysine 131, glutamate 149, aspartate 176, and aspartate 194. Cysteine 247 acts as the Nucleophile in catalysis.

It belongs to the class I-like SAM-binding methyltransferase superfamily. RsmB/NOP family.

It is found in the cytoplasm. The enzyme catalyses cytidine(1407) in 16S rRNA + S-adenosyl-L-methionine = 5-methylcytidine(1407) in 16S rRNA + S-adenosyl-L-homocysteine + H(+). Its function is as follows. Specifically methylates the cytosine at position 1407 (m5C1407) of 16S rRNA. The chain is Ribosomal RNA small subunit methyltransferase F from Shigella sonnei (strain Ss046).